The sequence spans 474 residues: Trigger factor (474 aa).

One can recognise a PPIase FKBP-type domain in the interval 171–258; it reads GDVAVIDFQG…LKELKTRDLP (88 aa). A disordered region spans residues 441–474; the sequence is TEVDAASATVETTATETAEEAPEAPKAKKGKKKA. The segment covering 444–456 has biased composition (low complexity); the sequence is DAASATVETTATE.

This sequence belongs to the FKBP-type PPIase family. Tig subfamily.

The protein localises to the cytoplasm. It carries out the reaction [protein]-peptidylproline (omega=180) = [protein]-peptidylproline (omega=0). In terms of biological role, involved in protein export. Acts as a chaperone by maintaining the newly synthesized protein in an open conformation. Functions as a peptidyl-prolyl cis-trans isomerase. This chain is Trigger factor, found in Synechococcus elongatus (strain ATCC 33912 / PCC 7942 / FACHB-805) (Anacystis nidulans R2).